A 122-amino-acid chain; its full sequence is Basic phospholipase A2 homolog ecarpholin S (122 aa).

Disulfide bonds link Cys26–Cys115, Cys28–Cys44, Cys43–Cys95, Cys49–Cys122, Cys50–Cys88, Cys57–Cys81, and Cys75–Cys86. Residues 105–117 are important for membrane-damaging activities in eukaryotes and bacteria; heparin-binding; it reads KKYTYYPNFWCKG.

In terms of tissue distribution, expressed by the venom gland.

The protein localises to the secreted. Suramin inhibits the myotoxic activity. In terms of biological role, snake venom phospholipase A2 homolog that lacks enzymatic activity. Shows high myotoxin activities and displays edema-inducing activities. This is Basic phospholipase A2 homolog ecarpholin S from Echis carinatus (Saw-scaled viper).